A 4499-amino-acid chain; its full sequence is Dynein alpha chain, flagellar outer arm (4499 aa).

Residues 1–1677 (MSIFWEVPNA…RIRICDASFP (1677 aa)) are stem. Kelch repeat units follow at residues 29–84 (RFVL…ALDD), 86–135 (RLLV…RFGS), 137–183 (VFIF…RFDH), 199–245 (KLLI…VCDG), 253–304 (KVFS…FDVK), and 307–358 (SLLI…IRGL). The stretch at 425–534 (FANTAARNCI…IRGSPFTVKC (110 aa)) is one Filamin repeat. 2 Kelch repeats span residues 562–608 (ELVL…VLSD) and 610–661 (ELVV…AVSA). The segment at 653-720 (PKGAAAVSAE…SRPVSAKPAP (68 aa)) is disordered. A compositionally biased stretch (low complexity) spans 655-689 (GAAAVSAEPSAEPAAEPAAEPAAEPDADAPAAEPA). The span at 690–705 (AEGEEGAVPAEGEEGA) shows a compositional bias: acidic residues. 2 Kelch repeats span residues 750–801 (LYVM…ATGN) and 864–913 (KLFL…TLSG). Coiled-coil stretches lie at residues 1261–1334 (ELHK…MIAN) and 1382–1450 (KKEL…RRAF). 2 AAA regions span residues 1678–1921 (YGYE…VLVV) and 1981–2225 (DVIV…KSYS). Residues 1716–1723 (GPAGTGKT) and 2019–2026 (GPTGTGRT) contribute to the ATP site. The stretch at 2269–2317 (MIWAFGGGLVEKDGIPYRRNFDKWFKQTWTTVKIPGKGTVYDYFVNPKT) is one Kelch 11 repeat. AAA regions lie at residues 2331 to 2577 (DYDG…VFQG) and 2679 to 2928 (EYNE…ERRY). 2369-2376 (GGAGVGKT) contacts ATP. Positions 2655–2688 (LADKAYDEVADYTSLYKTLTEALNEYNETNAAMD) form a coiled coil. 2717–2724 (GVGGSGKQ) is an ATP binding site. A coiled-coil region spans residues 3003–3023 (VGVEKEKVNAENAAAQVEAEK). Residues 3003–3262 (VGVEKEKVNA…ERWALTVEQL (260 aa)) are stalk. The Kelch 12 repeat unit spans residues 3070 to 3117 (LKKPPPGVDDITAVVIILLENNPKDKSWQAAQKLMNNVDKFLERVKSF). 2 coiled-coil regions span residues 3170–3262 (DVVQ…VEQL) and 3486–3515 (NKER…ELED). Residues 3320–3550 (LVDDALVAGW…AKRVSTEISE (231 aa)) are AAA 5. The segment at 3614–3687 (GRKKGKGLKK…VGDAEDEDDE (74 aa)) is disordered. Over residues 3630–3653 (QPMDHQSLMEKARRSSGVGDRRPS) the composition is skewed to basic and acidic residues. Residues 3843–4082 (LQNFCEHMMG…LTTCGDVLYN (240 aa)) form an AAA 6 region.

Belongs to the dynein heavy chain family. As to quaternary structure, consists of at least 3 heavy chains (alpha, beta and gamma), 2 intermediate chains and 8 light chains.

It is found in the cell projection. It localises to the cilium. The protein localises to the flagellum. Its subcellular location is the cytoplasm. The protein resides in the cytoskeleton. It is found in the flagellum axoneme. In terms of biological role, force generating protein of eukaryotic cilia and flagella. Produces force towards the minus ends of microtubules. Dynein has ATPase activity; the force-producing power stroke is thought to occur on release of ADP. The chain is Dynein alpha chain, flagellar outer arm (ODA11) from Chlamydomonas reinhardtii (Chlamydomonas smithii).